The following is a 354-amino-acid chain: Methionine import ATP-binding protein MetN (354 aa).

The region spanning 8–250 (LDHIDITFRQ…PKEALTQEFI (243 aa)) is the ABC transporter domain. Residue 42-49 (GYSGAGKS) participates in ATP binding.

It belongs to the ABC transporter superfamily. Methionine importer (TC 3.A.1.24) family. The complex is composed of two ATP-binding proteins (MetN), two transmembrane proteins (MetI) and a solute-binding protein (MetQ).

The protein resides in the cell membrane. It carries out the reaction L-methionine(out) + ATP + H2O = L-methionine(in) + ADP + phosphate + H(+). It catalyses the reaction D-methionine(out) + ATP + H2O = D-methionine(in) + ADP + phosphate + H(+). Functionally, part of the ABC transporter complex MetNIQ involved in methionine import. Responsible for energy coupling to the transport system. This chain is Methionine import ATP-binding protein MetN, found in Streptococcus pyogenes serotype M3 (strain ATCC BAA-595 / MGAS315).